Consider the following 437-residue polypeptide: FK506-binding protein 3 (437 aa).

3 stretches are compositionally biased toward acidic residues: residues 73-90 (DIEA…EEEE), 106-131 (EEEE…EDVS), and 179-220 (ADED…DASD). 2 disordered regions span residues 73 to 132 (DIEA…DVSE) and 169 to 349 (HLTG…QTAK). Composition is skewed to basic and acidic residues over residues 256-270 (KKED…KDLE) and 292-324 (AKKE…EASK). The region spanning 351 to 437 (GNKVGIRYIG…TFDIKLVSIK (87 aa)) is the PPIase FKBP-type domain.

It belongs to the FKBP-type PPIase family. FKBP3/4 subfamily.

It localises to the nucleus. The protein resides in the nucleolus. It carries out the reaction [protein]-peptidylproline (omega=180) = [protein]-peptidylproline (omega=0). With respect to regulation, inhibited by both FK506 and rapamycin. Its function is as follows. PPIases accelerate the folding of proteins. It catalyzes the cis-trans isomerization of proline imidic peptide bonds in oligopeptides. In Debaryomyces hansenii (strain ATCC 36239 / CBS 767 / BCRC 21394 / JCM 1990 / NBRC 0083 / IGC 2968) (Yeast), this protein is FK506-binding protein 3 (FPR3).